We begin with the raw amino-acid sequence, 295 residues long: Dehydrodolichyl diphosphate synthase 6 (295 aa).

It belongs to the UPP synthase family. Requires Mg(2+) as cofactor.

It participates in protein modification; protein glycosylation. Functionally, catalyzes cis-prenyl chain elongation to produce the polyprenyl backbone of dolichol, a glycosyl carrier-lipid required for the biosynthesis of several classes of glycoprotein. The protein is Dehydrodolichyl diphosphate synthase 6 of Arabidopsis thaliana (Mouse-ear cress).